A 183-amino-acid chain; its full sequence is ATP synthase subunit delta (183 aa).

Belongs to the ATPase delta chain family. F-type ATPases have 2 components, F(1) - the catalytic core - and F(0) - the membrane proton channel. F(1) has five subunits: alpha(3), beta(3), gamma(1), delta(1), epsilon(1). F(0) has three main subunits: a(1), b(2) and c(10-14). The alpha and beta chains form an alternating ring which encloses part of the gamma chain. F(1) is attached to F(0) by a central stalk formed by the gamma and epsilon chains, while a peripheral stalk is formed by the delta and b chains.

It localises to the cell inner membrane. F(1)F(0) ATP synthase produces ATP from ADP in the presence of a proton or sodium gradient. F-type ATPases consist of two structural domains, F(1) containing the extramembraneous catalytic core and F(0) containing the membrane proton channel, linked together by a central stalk and a peripheral stalk. During catalysis, ATP synthesis in the catalytic domain of F(1) is coupled via a rotary mechanism of the central stalk subunits to proton translocation. In terms of biological role, this protein is part of the stalk that links CF(0) to CF(1). It either transmits conformational changes from CF(0) to CF(1) or is implicated in proton conduction. The chain is ATP synthase subunit delta from Maridesulfovibrio salexigens (strain ATCC 14822 / DSM 2638 / NCIMB 8403 / VKM B-1763) (Desulfovibrio salexigens).